The sequence spans 842 residues: Glycogen phosphorylase, muscle form (842 aa).

An N-acetylserine modification is found at Ser2. Ser15 carries the phosphoserine; by PHK; in form phosphorylase A modification. Residues Asp43 and Tyr76 each contribute to the AMP site. Residues Tyr204 and Tyr227 each carry the phosphotyrosine modification. 310–319 is a binding site for AMP; sequence RRFKSSKFGC. Ser430 carries the post-translational modification Phosphoserine. At Tyr473 the chain carries Phosphotyrosine. An N6-(pyridoxal phosphate)lysine modification is found at Lys681. Phosphoserine occurs at positions 747 and 748.

It belongs to the glycogen phosphorylase family. Homodimer. Homotetramer; to form the enzymatically active phosphorylase A. Requires pyridoxal 5'-phosphate as cofactor. Post-translationally, phosphorylation of Ser-15 converts phosphorylase B (unphosphorylated) to phosphorylase A.

The catalysed reaction is [(1-&gt;4)-alpha-D-glucosyl](n) + phosphate = [(1-&gt;4)-alpha-D-glucosyl](n-1) + alpha-D-glucose 1-phosphate. Its activity is regulated as follows. Allosterically regulated through the non-covalent binding of metabolites, being activated by AMP and inhibited by ATP, ADP, and glucose-6-phosphate. The activity is also controlled by post-translational modifications including phosphorylation. Functionally, allosteric enzyme that catalyzes the rate-limiting step in glycogen catabolism, the phosphorolytic cleavage of glycogen to produce glucose-1-phosphate, and plays a central role in maintaining cellular and organismal glucose homeostasis. The protein is Glycogen phosphorylase, muscle form of Bos taurus (Bovine).